Consider the following 386-residue polypeptide: Succinyl-diaminopimelate desuccinylase (386 aa).

Position 72 (H72) interacts with Zn(2+). D74 is a catalytic residue. Zn(2+) is bound at residue D105. E139 acts as the Proton acceptor in catalysis. Positions 140, 168, and 353 each coordinate Zn(2+).

It belongs to the peptidase M20A family. DapE subfamily. In terms of assembly, homodimer. It depends on Zn(2+) as a cofactor. The cofactor is Co(2+).

It carries out the reaction N-succinyl-(2S,6S)-2,6-diaminopimelate + H2O = (2S,6S)-2,6-diaminopimelate + succinate. It participates in amino-acid biosynthesis; L-lysine biosynthesis via DAP pathway; LL-2,6-diaminopimelate from (S)-tetrahydrodipicolinate (succinylase route): step 3/3. Functionally, catalyzes the hydrolysis of N-succinyl-L,L-diaminopimelic acid (SDAP), forming succinate and LL-2,6-diaminopimelate (DAP), an intermediate involved in the bacterial biosynthesis of lysine and meso-diaminopimelic acid, an essential component of bacterial cell walls. This Rhodospirillum centenum (strain ATCC 51521 / SW) protein is Succinyl-diaminopimelate desuccinylase.